Consider the following 955-residue polypeptide: Kinesin-like protein NACK2 (955 aa).

Residues 36–357 enclose the Kinesin motor domain; that stretch reads KILVTIRVRP…LCFATSAKEV (322 aa). Residue 120 to 127 coordinates ATP; it reads GQTSSGKT. 2 coiled-coil regions span residues 366–443 and 566–604; these read VVAE…LKGS and KASL…VMHL.

Belongs to the TRAFAC class myosin-kinesin ATPase superfamily. Kinesin family. KIN-7 subfamily.

The protein resides in the cytoplasm. It is found in the nucleus. Its subcellular location is the cytoskeleton. The protein localises to the phragmoplast. Functionally, probable plus end-directed motor protein that may function in the NACK-PQR (NPK1-NQK1/MEK1-NRK1) MAP kinase signaling pathway, which is essential for somatic cell cytokinesis, especially for the cell-plate formation and its expansion. May regulate the activity and the localization of NPK1, probably by association through the non-catalytic region of the kinase. The polypeptide is Kinesin-like protein NACK2 (NACK2) (Nicotiana tabacum (Common tobacco)).